A 466-amino-acid polypeptide reads, in one-letter code: Soluble pyridine nucleotide transhydrogenase (466 aa).

36 to 45 (ERYQNVGGGC) contributes to the FAD binding site.

This sequence belongs to the class-I pyridine nucleotide-disulfide oxidoreductase family. As to quaternary structure, homooligomer; probable homooctamer. FAD is required as a cofactor.

It is found in the cytoplasm. The enzyme catalyses NAD(+) + NADPH = NADH + NADP(+). Its function is as follows. Conversion of NADPH, generated by peripheral catabolic pathways, to NADH, which can enter the respiratory chain for energy generation. In Shigella flexneri, this protein is Soluble pyridine nucleotide transhydrogenase.